Reading from the N-terminus, the 224-residue chain is Prothoracicotropic hormone (224 aa).

An N-terminal signal peptide occupies residues methionine 1–leucine 29. 3 disulfides stabilise this stretch: cysteine 132–cysteine 169, cysteine 155–cysteine 211, and cysteine 163–cysteine 213. An N-linked (GlcNAc...) asparagine glycan is attached at asparagine 156.

As to quaternary structure, homodimer; disulfide-linked. PTTH is synthesized by two dorsolateral neurosecretory cells of the Bombyx brain.

In terms of biological role, PTTH is a brain secretory polypeptide of insects which stimulates the prothoracic glands to produce and release ecdysone, the steroid essential to insect development. Its function is as follows. Peptides P2K and P6K are presumed to be cleaved post-translationally and may play some unknown physiologically or developmentally important functions. This is Prothoracicotropic hormone from Bombyx mori (Silk moth).